Reading from the N-terminus, the 236-residue chain is Phosphoribosylaminoimidazole-succinocarboxamide synthase (236 aa).

It belongs to the SAICAR synthetase family.

The catalysed reaction is 5-amino-1-(5-phospho-D-ribosyl)imidazole-4-carboxylate + L-aspartate + ATP = (2S)-2-[5-amino-1-(5-phospho-beta-D-ribosyl)imidazole-4-carboxamido]succinate + ADP + phosphate + 2 H(+). Its pathway is purine metabolism; IMP biosynthesis via de novo pathway; 5-amino-1-(5-phospho-D-ribosyl)imidazole-4-carboxamide from 5-amino-1-(5-phospho-D-ribosyl)imidazole-4-carboxylate: step 1/2. This is Phosphoribosylaminoimidazole-succinocarboxamide synthase from Rickettsia massiliae (strain Mtu5).